We begin with the raw amino-acid sequence, 187 residues long: UPF0340 protein SGO_0411 (187 aa).

It belongs to the UPF0340 family.

The protein is UPF0340 protein SGO_0411 of Streptococcus gordonii (strain Challis / ATCC 35105 / BCRC 15272 / CH1 / DL1 / V288).